Here is a 490-residue protein sequence, read N- to C-terminus: MAERAARHCCLGWDFSTQQVKVVAVDAELSVFYEDSVHFDRDLVEFGTQGGVHVHKDGLTVTSPVLMWVQALDIILEKMKASGFDFSQVLALSGAGQQHGSVYWKTGASQVLTSLSPDLPLREQLQACFSISNCPVWMDSSTAAQCRQLEAAVGGAQALSLLTGSRAYERFTGNQIAKIYQQNPEAYSHTERISLVSSFAASLFLGSYSPVDYSDGSGMNLLQIQDKVWSQACLGACAPRLEEKLGRPVPSCSIVGAISSYFVQRYGFPPECKVVAFTGDNPASLAGMRLEEGDIAVSLGTSDTLFLWLQEPTPALEGHIFCNPVDPQHYMALLCFKNGSLMREKIRDESASGSWSKFSKALQSTGMGNSGNLGFYFDVMEITPEIIGRHRFTAENHEVSAFPQDVEIRALIEGQFMAKKIHAEALGYRVMPKTKILATGGASHNRDILQVLADVFGAPVYVIDTANSACVGSAYRAFHGPSLLCLVSIY.

4 residues coordinate substrate: His-99, Arg-170, Asp-280, and Asn-281. ATP is bound by residues Trp-355, 441 to 442 (GA), and Asn-445.

This sequence belongs to the FGGY kinase family. In terms of assembly, monomer.

The enzyme catalyses D-xylulose + ATP = D-xylulose 5-phosphate + ADP + H(+). Phosphorylates D-xylulose to produce D-xylulose 5-phosphate, a molecule that may play an important role in the regulation of glucose metabolism and lipogenesis. The protein is Xylulose kinase (XYLB) of Bos taurus (Bovine).